A 295-amino-acid polypeptide reads, in one-letter code: Polyisoprenoid diphosphate/phosphate phosphohydrolase PLPP6 (295 aa).

Disordered regions lie at residues 1-39 (MPSP…SRFE) and 61-90 (SESP…PEED). The Cytoplasmic portion of the chain corresponds to 1 to 132 (MPSPRRSMEG…ESSSWGSVRP (132 aa)). The span at 16-27 (SASSSSSSPGSP) shows a compositional bias: low complexity. A phosphoserine mark is found at S26, S36, and S70. The helical transmembrane segment at 133-153 (LMKLLEISGHGIPWLLGTLYC) threads the bilayer. At 154–164 (LCRSDSWAGRE) the chain is on the lumenal side. The helical transmembrane segment at 165–185 (VLMNLLFALLLDLLLVALIKG) threads the bilayer. The tract at residues 184-192 (KGLVRRRRP) is phosphatase sequence motif I. At 186–228 (LVRRRRPAHNQMDMFVTLSVDKYSFPSGHATRAALMSRFILNH) the chain is on the cytoplasmic side. Residues 211 to 214 (PSGH) are phosphatase sequence motif II. The active-site Proton donors is H214. A helical membrane pass occupies residues 229–249 (LVLAIPLRVLVVLWAFVLGLS). Positions 249 to 260 (SRVMLGRHNVTD) are phosphatase sequence motif III. Over 250 to 260 (RVMLGRHNVTD) the chain is Lumenal. The active-site Nucleophile is the H256. Residues 261 to 281 (VAFGFFLGYMQYSIVDYCWLS) form a helical membrane-spanning segment. Topologically, residues 282 to 295 (PHNAPVLFLLWSQR) are cytoplasmic.

Belongs to the PA-phosphatase related phosphoesterase family. Phosphorylation by PKC activates the phosphatase activity towards presqualene diphosphate. Widely expressed. Expressed in most organs, in particular gastrointestinal organs, spleen, placenta, kidney, thymus and brain.

The protein resides in the endoplasmic reticulum membrane. It localises to the nucleus envelope. It is found in the nucleus inner membrane. The enzyme catalyses presqualene diphosphate + H2O = presqualene phosphate + phosphate + H(+). It catalyses the reaction presqualene phosphate + H2O = presqualene alcohol + phosphate. It carries out the reaction (2E,6E)-farnesyl diphosphate + H2O = (2E,6E)-farnesyl phosphate + phosphate + H(+). The catalysed reaction is (2E,6E)-farnesyl phosphate + H2O = (2E,6E)-farnesol + phosphate. The enzyme catalyses (2E,6E,10E)-geranylgeranyl diphosphate + H2O = (2E,6E,10E)-geranylgeranyl phosphate + phosphate + H(+). It catalyses the reaction (2E,6E,10E)-geranylgeranyl phosphate + H2O = (2E,6E,10E)-geranylgeraniol + phosphate. It carries out the reaction (2E)-geranyl diphosphate + H2O = (2E)-geranyl phosphate + phosphate + H(+). The catalysed reaction is (2E)-geranyl phosphate + H2O = (2E)-geraniol + phosphate. The enzyme catalyses 1,2-dihexadecanoyl-sn-glycero-3-phosphate + H2O = 1,2-dihexadecanoyl-sn-glycerol + phosphate. Its activity is regulated as follows. Inhibited by propranolol. Not inhibited by N-ethylmaleimide or bromoenolactome. In terms of biological role, magnesium-independent polyisoprenoid diphosphatase that catalyzes the sequential dephosphorylation of presqualene, farnesyl, geranyl and geranylgeranyl diphosphates. Functions in the innate immune response through the dephosphorylation of presqualene diphosphate which acts as a potent inhibitor of the signaling pathways contributing to polymorphonuclear neutrophils activation. May regulate the biosynthesis of cholesterol and related sterols by dephosphorylating presqualene and farnesyl diphosphate, two key intermediates in this biosynthetic pathway. May also play a role in protein prenylation by acting on farnesyl diphosphate and its derivative geranylgeranyl diphosphate, two precursors for the addition of isoprenoid anchors to membrane proteins. Has a lower activity towards phosphatidic acid (PA), but through phosphatidic acid dephosphorylation may participate in the biosynthesis of phospholipids and triacylglycerols. May also act on ceramide-1-P, lysophosphatidic acid (LPA) and sphing-4-enine 1-phosphate/sphingosine-1-phosphate. The protein is Polyisoprenoid diphosphate/phosphate phosphohydrolase PLPP6 of Homo sapiens (Human).